A 161-amino-acid polypeptide reads, in one-letter code: Endoribonuclease YbeY (161 aa).

Zn(2+) contacts are provided by His-127, His-131, and His-137.

This sequence belongs to the endoribonuclease YbeY family. Zn(2+) serves as cofactor.

Its subcellular location is the cytoplasm. Its function is as follows. Single strand-specific metallo-endoribonuclease involved in late-stage 70S ribosome quality control and in maturation of the 3' terminus of the 16S rRNA. The chain is Endoribonuclease YbeY from Listeria monocytogenes serotype 4b (strain CLIP80459).